A 335-amino-acid polypeptide reads, in one-letter code: MAASLGFRGAASGLRYWSGRRRPVGSLAAVCSRSMASKTPVGFIGLGNMGNPMAKNLIKHGYPLILYDVFPDVCKEFKEAGEQVASSPADVAEKADRIITMLPSSMNSIEVYSGANGILKKVKKGSLLIDSSTIDPSVSKELAKEVEKMGAVFMDAPVSGGVGAARSGNLTFMVGGVENEFAAAQELLGCMGSNVLYCGAVGSGQSAKICNNMLLAISMIGTAEAMNLGIRSGLDPKLLAKILNMSSGRCWSSDTYNPVPGVMDGVPSSNNYQGGFGTTLMAKDLGLAQDSATSTKTPILLGSVAHQIYRMMCSKGYSKKDFSSVFQYLREEETF.

Residues 1 to 35 (MAASLGFRGAASGLRYWSGRRRPVGSLAAVCSRSM) constitute a mitochondrion transit peptide. 39–68 (TPVGFIGLGNMGNPMAKNLIKHGYPLILYD) is a binding site for NAD(+). Residues K59 and K75 each carry the N6-acetyllysine; alternate modification. Residues K59 and K75 each carry the N6-succinyllysine; alternate modification. The residue at position 94 (K94) is an N6-succinyllysine. NAD(+)-binding positions include 102-103 (LP) and N107. Position 120 is an N6-acetyllysine (K120). T133 lines the NAD(+) pocket. At K140 the chain carries N6-succinyllysine. At K144 the chain carries N6-acetyllysine. K148 bears the N6-acetyllysine; alternate mark. K148 is modified (N6-succinyllysine; alternate). The active site involves K208. K237 and K241 each carry N6-acetyllysine; alternate. N6-succinyllysine; alternate occurs at positions 237 and 241. K283 serves as a coordination point for NAD(+). K296 carries the N6-succinyllysine modification. At K320 the chain carries N6-acetyllysine; alternate. At K320 the chain carries N6-succinyllysine; alternate.

This sequence belongs to the HIBADH-related family. 3-hydroxyisobutyrate dehydrogenase subfamily. In terms of assembly, homodimer. As to expression, higher level in kidney, liver, and heart than in muscle.

It is found in the mitochondrion. The catalysed reaction is 3-hydroxy-2-methylpropanoate + NAD(+) = 2-methyl-3-oxopropanoate + NADH + H(+). Its pathway is amino-acid degradation; L-valine degradation. In Rattus norvegicus (Rat), this protein is 3-hydroxyisobutyrate dehydrogenase, mitochondrial (Hibadh).